The chain runs to 4699 residues: MSDNDDEWNGFSDDNGEDDGPPEPGRPSQIDGQPWDVPDSALLQGDVIPNPKDSDFATDFAKIEELQGAINAWARSRGFAVVRRHGRNKQDGLYTRFDILCDRFGSPRAPRGAGVRETATRKCDCKWKAAASRTKDGWRFHSHPDPQHSVHNHGPSLHPSAHTQHRMSNSESLDTIAELSNHASIRAREIRSVVNQEHDTIYTRKDIYNVRAKMRKVNLDGYTAAGALIKALDNVDGDTANHYEVEWADAAETIFCSLVWGFESCLEATSIYHDCMLIDLTYNTNYMGMPLYQVNCLTSVGKTLSTMFGLVSDETTQTFRWLMKATKKLRDKFNIPEPAVIVTDHCKELKQAISEVFPDSQQQTCIFHVIKNVMLNTKRKFKYPGRDEVDSEDEEYRADFEDYDGVSPQERAAMEKDHAERLLSRNTSTSKVTKPISHDPRGVEEMFKAMQWMSCRDQWAHCYTRHYRNFGVRTTSPTESNNMSIKSYLINGRSSAYSLVSVSQDLCKEQVQQNVEEMAKQAIRARHDFLSRPWLGALPLRVSYKALDLIVGEYRRAKAAMPSTRPSQSIRRPLEPCHPDTCTATIQYSIPCRHDIYKKLAEGERLELREVHTHWHLQMSLVKPPLPSVEDNVADPKIVENRKGRPKNSARPLPDGLGIPSSPKTPRSQRRDGTQGSQGSQGRRTPGSTPGPPRGNAPRLQPSIRRVLSAHETVEEPRPPQAAPKRRGRPPGSKNKKKDQAPAPAESQLSAAERAEPRTTLVIASAPRRGLRAAPAAETTASEKRKAQAGGDSAPAPKRTRATASTPRAQSDQGTGNVAIPSLPAPAGAPGARVTRSGRAVRLTAKAAKAASGGRISYFFDWHGPSITIDTACSSSLIAVHQAVQSLRNGEVPLAIAAGANLLLGPSQYVAESKLKMLSPGGLSRMWDEEADGYARGDGFASVVLKPLKDAIRDGDRIECIIRETGSNQDGRTQGITMPSPIAQSALIRETYQRAGLDLSRPADRPQYFEAHGTGTPAGDPVESEAISTAFFGPDSRFKRQPGDAKLLVGSIKTVLGHTEGTAGLASLIKVSLALQNGKVPPNLHFNRLSPSVKPHYQNLQIPTSLLDWPEVPEGGVRRASVNSFGFGGANAHAILEAYTPATAKELLTAPSPFSFAPLLFSAASDTALAANIAAHADFVEKASDVNLGDIAHTLHSHRSALAKRAVFAAASRSDLVARLRGHAAEDKAKSDAAAPLGRSLSSRPRTLGVFTGQGAQWPRMGAELIERSEAVSRIVDELEASLATLPQQDRPSWSLRAEMLAPAASSQIGKAEFSQPLCTALQIILVDVLREAGVVFDAVVGHSSGEIAAAYAAGVVTASEAMRIAYYRGFHTHRCGGAGGQSGAMMAVGTSFEDAQELCALDAFKGRLSVAASNSSSSITLSGDADAVAEAAVVCEEENKFHRALRVDKAYHSHHMVPCLGPYVESLRGACNISPTPQNGSGSGCVWISSVYATDIADVQDDIGSEYWAKNMGQTVLFSQALETALRERGPFDQVVELGAHPALKGPAMQVIEETTREKIPYVGTLLRQRDATEALAESLGALWAANGRASVDLAKYEAFLSGGRVHQVLADELPRYQWDHQTAYYHDSRLLKALRTSSIKPNELLGTRIMDNSPSEARWRNRLSANEVPWLRDHRVQNQAIFPGAGYIATGLEAVRELLGNEPLLLVNMQDIFIGQALIIPEPGSVETLVSVTNIVRGADKITARFTFFADEGRADSVSMAEKASANLIISLGEPDPDALPPRPEPGRDYHMLDVPAERFYDAVGSLGFGYTGPFRALSGLSRKMDYATGSVVQPEPTEGFGRLLVHPAALDAAVQSIILAYCFPGDTRLRTTHLPTRIDSLRVNIPLCEADRSAQTPFRSSVPSGGGVELSDINGDVDLYDENGSTLIQLQGLHTKPLVPPTPSTDLPLFTEWVWGPLSPHGRDLTLRGAEAEAERDLFNDLERVAYFYLRRLDAAIPPEQRVDLPAHQTALFRIDLELMHAVGENLASVIRGEMNMLEPMMQDNKLNRFYIEALGMSRYLEELSRMAAQISHRYPQMHVLEVGAGTGGATKVLLRHLEGGFESYAYTDISSGFFPSARETFEAYTDKMTFKTLDIEKDIAEQGYQEESFDLVIANLVVHATKDLQVTVRNLRRLVKPGGYLLLLEITDNDPLRFGFIFGGLPGWWLGEEEDRGLSPCVEVATWDRILRNTGFSGADEVTVRDPNNPLSVILTQALDDRVELLRQPLTAQPSSEGVQLDSLTILGAETGRAAELARDVEALLSPYFRRSRTVSSLVGLGPQDLPLMGTVLSLVELDTPVFKGITPERLRGFQQVFQQSKNVLWVTTGYKADDPYSAMVYGVGRNVVLEMSHLRLQFLDLETLAAADPRILAECVLRFEFSDMWEQAADKRPLLWTTEPDLAYEEGRLRMPRIKVSKERNARYNSSRRPVTKEVDPIASPLALQPLDDTGKDYALVAPSGRLAAGTRLDTVKIRVAKSILRAVRVLATNYLFVVAGFAENGTSPLVAVSDSQASVVEVDRAWTMPIQHSEGAADTAVETAMEQAMVALYDGLLAQALLQDVEHGRALAVLDASPSLTRALRSSGRYRGVQVVSLASKAAASGVPGTIPVHPRESVRSLKSKLPAHVDKLANFSDRADLARTVASCLPTRCDFQDWQSLTRPGAVITERTLLGLADCEVPSVLRAAWAHVKVDQRSTDLAGVLRADPTSLSQAAVVPGDAANQVCLVDWARRPTLPARIQPLVTTITFSPDKTYWLVGLTGGLGQSLCRWMVERGARYLVLTSRNPKLDPRWLAGVEALGAVVRAFPNDITSRDAVQAAYRTITATMPPIGGVAHGAMVLHDSMFAEVTVEKMDKVLRPKVDGAIHLDEIFYDAPLDWFVYLSSVVVITGNKGQGIYAAANMFLNSMTMQRRKRGVPAAAVNIGAVLGNGYVTRELNHQQQTFLQEVGNNWLSEQDFLTIFAEGVAASRVDSTEAVEITTGLRMLSSRDENVTWATNPKFQYLVQAHVASAAAKLAKSSNVSLKKQLEDVKTIQDASEILEDAYTSKLRAVLQIAPDRDVLSAALDDLGMDSLVAVEIRSWVLKELSADITVLEVLNSGTAGALFELVKERALASLALLDSGEQPDQVKSPRAAPLDLVSGHGGGDRRPSTVVDVADTSLDQGSSWDSGSLREASNGHDSTILSSTAPSSPISKPAGVDASDLEQTPIPEDSEEPVASSPDAGLARSVPLSFSQARFWFLRHFLPDQSAFNITSVVRMHGRPDMERLARAIKAVGNHHEALRTAFRVGEGNEPVQAVLKETVLVLEHRDISDADDVTPAYEAVQRHVYDLEAGETMRLQVLTLSPTEHFLILGYHHINMDGISFEVLFNDLQKAYRGVEFTPGVAQYPAFSILERDEYRLGKWKTELDFWKAEFAHLPEPLPLLPLSQRASRPAVAQYATLRVERRIPADLSATIKSAARKFGAGVFAFYLAVLKALVVRYVDVDNLCIGLADANRRRAEVLESIGLYLNLVPLNVPCDRTQPFSDALREMHTKYQRAFANARVPFDVLLHELDVPRSSSHPPLFQVFMNYRQGVSEAREFCDCECEGELVSGGQLAYDIAVDVVENPGGETNVMLSVQQSLYNAASAEVLLDSFFSLMEGFAANPISRISKPPLHRQTAIEQAVELANGPILDLAWAPTVSHRIDEMIQAHPDKLALTDGQGTDLTYAQLGASVNGIVQGLREVRASNVVGVLQHPTPAAICSILAVLKAGLTYVPLDPRVGPAKLAAIVGEAKPSCILVDDATEVDIGSFSLDDTAKVRNVASLPPSEDRLPIEAVPAGTAVLHCAAASRRPVSELAVQEGSETILQQTAFSFDISLFQSLLALTTASTLVVAPREVRGDPAALAKLMLIAGVTVTAATPTEYVHLIGHGASQLKQNDKWRLALCGGEKLSDQVVSGFRSLNRPELTLVNDYGPAEATFRCSTTVVPYQEEDGQELARTTPLKTCANSAVYILGDDMKPLPVGLTGEVCVGGAGVGLGYLNNHQLSAQRFIANPYASPAFVARGWTTMHPTGDRGRLSPDGGLILEGRIDGDTQVKLGGIRIELEEVERAVINDSQGAIREAAVSVRTDEASGTEYLVAHAVMQDRADSTPAHVDWLQQLQSRLSLPRYMAPSAIVPVAALPLSVSGKLDRRALRELPVATALTTQTPAEESEGLPAMQHLIKQLWEQVIPNGLLAGRDIGPKTDFFNVGGSSLLLVQLQALLREQFSVAPLVQELFQASTLETMAALVASGSGSSTQQGSDTTPAPIDWEAEAGLLQDAYYNSTTEKKQSGPAVANPPKVVVLTGSTGFLGRHLLERLLRTSHIEKVYCVAVRKQPAELPGIFNDPRVEVFPGDLSLAGLGLSDADTERVFSTADAVLHNGADVSFMKTYISLRPTNVAATQQLAALAQRQGRRIPFHFVSSAAVTQLTPLDEVGEVSVAAYPPAVSSPSSSSSAGGYVAAKWVSERHLEQVAQAHGLPVTIHRPSSILGNDASDVDLMGNLFRYVERLQAVPESRDWKGYFDLISVHTVAAAIVKAVVAAREEEQEEEEGHEKGGPAGRVRYQYEAGEIVYPLSTVADMGELEAAGFVLKTLPLEEWVAQAEGAGLNPLLAAYLKAAAGGGVRWAFPKLVSSTV.

Positions 1–21 are enriched in acidic residues; sequence MSDNDDEWNGFSDDNGEDDGP. Disordered regions lie at residues 1–38 and 136–165; these read MSDN…WDVP and DGWR…HTQH. The span at 136-148 shows a compositional bias: basic and acidic residues; the sequence is DGWRFHSHPDPQH. The N-terminal acylcarrier protein transacylase domain (SAT) stretch occupies residues 172-520; that stretch reads SLDTIAELSN…VQQNVEEMAK (349 aa). The interval 625–836 is disordered; sequence PLPSVEDNVA…AGAPGARVTR (212 aa). The span at 674-688 shows a compositional bias: low complexity; it reads TQGSQGSQGRRTPGS. Over residues 724–737 the composition is skewed to basic residues; that stretch reads PKRRGRPPGSKNKK. A Ketosynthase family 3 (KS3) domain is found at 737-1138; that stretch reads KKDQAPAPAE…GANAHAILEA (402 aa). Low complexity predominate over residues 764–777; it reads ASAPRRGLRAAPAA. The segment covering 802–816 has biased composition (polar residues); it reads ATASTPRAQSDQGTG. Active-site for beta-ketoacyl synthase activity residues include Cys873, His1012, and His1058. Residues 1250–1573 are malonyl-CoA:ACP transacylase (MAT) domain; the sequence is VFTGQGAQWP…VGTLLRQRDA (324 aa). Residues 1644-1777 are N-terminal hotdog fold; the sequence is NELLGTRIMD…ANLIISLGEP (134 aa). The PKS/mFAS DH domain occupies 1644–1947; it reads NELLGTRIMD…TKPLVPPTPS (304 aa). The segment at 1645 to 1941 is dehydratase (DH) domain; the sequence is ELLGTRIMDN…QLQGLHTKPL (297 aa). His1676 (proton acceptor; for dehydratase activity) is an active-site residue. The C-terminal hotdog fold stretch occupies residues 1794–1947; that stretch reads MLDVPAERFY…TKPLVPPTPS (154 aa). Asp1854 (proton donor; for dehydratase activity) is an active-site residue. The methyltransferase (MT) domain stretch occupies residues 2050–2241; the sequence is LNRFYIEALG…RNTGFSGADE (192 aa). Residues 2794–2967 form a ketoreductase (KR) domain region; the sequence is TYWLVGLTGG…PAAAVNIGAV (174 aa). A Carrier 1 domain is found at 3076-3153; that stretch reads DASEILEDAY…ALFELVKERA (78 aa). Ser3113 carries the O-(pantetheine 4'-phosphoryl)serine modification. A disordered region spans residues 3164–3265; it reads EQPDQVKSPR…PVASSPDAGL (102 aa). Polar residues-rich tracts occupy residues 3200–3209 and 3218–3233; these read SLDQGSSWDS and GHDS…SSPI. A condensation (C) domain region spans residues 3268–3696; that stretch reads SVPLSFSQAR…PISRISKPPL (429 aa). An adenylation (A) domain region spans residues 3730 to 4113; that stretch reads IQAHPDKLAL…GGLILEGRID (384 aa). One can recognise a Carrier 2 domain in the interval 4236–4316; it reads EGLPAMQHLI…TMAALVASGS (81 aa). The tract at residues 4241–4313 is thiolation and peptide carrier (T) domain; the sequence is MQHLIKQLWE…TLETMAALVA (73 aa). Ser4276 is subject to O-(pantetheine 4'-phosphoryl)serine. Positions 4367 to 4598 are reductase (R) domain; that stretch reads LTGSTGFLGR…ISVHTVAAAI (232 aa).

This sequence in the C-terminal section; belongs to the NRP synthetase family.

It functions in the pathway secondary metabolite biosynthesis. PKS-NRPS hybrid synthetase; part of the gene cluster that mediates the biosynthesis of chaetoglobosin A which has a unique inhibitory activity against actin polymerization in mammalian cells. Chaetoglobosin A and its intermediates are involved in the morphological differentiation of C.globosum. The first step of the pathway is the synthesis of prochaetoglobosin I via condensation of one acetyl-CoA, 8 malonyl-CoA, and a L-tryptophan molecule by the PKS-NRPS hybrid synthetase cheA, followed by reduction of backbone double bond to install desired geometry by the enoyl reductase cheB. Further multiple oxidation steps performed by the cytochrome P450 monooxygenases cheE and cheG, as well as by the FAD-linked oxidoreductase cheF, lead to the formation of chaetoglobosin A. Depending on the order of action of these reductases, distinct intermediates can be identified. Within the pathway, the cytochrome P450 monooxygenase cheE catalyzes a stereospecific epoxidation on prochaetoglobosin I, cytoglobosin D, and chaetoglobosin J intermediates. The FAD-linked oxidoreductase cheF performs dehydrogenation of the C-20 hydroxyl groups in the 20-dihyrochaetoglobosin A and cytoglobosin D intermediates. Finally, the cytochrome P450 monooxygenase cheG can catalyze the stereospecific dihydroxylation of prochaetoglobosin I and prochaetoglobosin IV at C-19 and C-20, respectively. The Diels-Alderase cheD may play a role in the post-PKS-NRPS biosynthetic steps catalyzing Diels-Alder cyclization. This chain is PKS-NRPS hybrid synthetase cheA, found in Chaetomium globosum (strain ATCC 6205 / CBS 148.51 / DSM 1962 / NBRC 6347 / NRRL 1970) (Soil fungus).